Consider the following 78-residue polypeptide: Large ribosomal subunit protein bL28 (78 aa).

A disordered region spans residues 1–20; the sequence is MSRVCQVTGKRPAVGNNRSH.

This sequence belongs to the bacterial ribosomal protein bL28 family.

In Actinobacillus succinogenes (strain ATCC 55618 / DSM 22257 / CCUG 43843 / 130Z), this protein is Large ribosomal subunit protein bL28.